Consider the following 267-residue polypeptide: Thiazole synthase (267 aa).

The active-site Schiff-base intermediate with DXP is the Lys-107. Residues Gly-168, 194–195 (AG), and 216–217 (NT) each bind 1-deoxy-D-xylulose 5-phosphate.

This sequence belongs to the ThiG family. In terms of assembly, homotetramer. Forms heterodimers with either ThiH or ThiS.

It is found in the cytoplasm. The catalysed reaction is [ThiS sulfur-carrier protein]-C-terminal-Gly-aminoethanethioate + 2-iminoacetate + 1-deoxy-D-xylulose 5-phosphate = [ThiS sulfur-carrier protein]-C-terminal Gly-Gly + 2-[(2R,5Z)-2-carboxy-4-methylthiazol-5(2H)-ylidene]ethyl phosphate + 2 H2O + H(+). It participates in cofactor biosynthesis; thiamine diphosphate biosynthesis. Its function is as follows. Catalyzes the rearrangement of 1-deoxy-D-xylulose 5-phosphate (DXP) to produce the thiazole phosphate moiety of thiamine. Sulfur is provided by the thiocarboxylate moiety of the carrier protein ThiS. In vitro, sulfur can be provided by H(2)S. The sequence is that of Thiazole synthase from Aquifex aeolicus (strain VF5).